The sequence spans 196 residues: Probable thymidylate kinase (196 aa).

7-14 (GIDGSGKS) is a binding site for ATP.

The protein belongs to the thymidylate kinase family.

It catalyses the reaction dTMP + ATP = dTDP + ADP. The chain is Probable thymidylate kinase from Natronomonas pharaonis (strain ATCC 35678 / DSM 2160 / CIP 103997 / JCM 8858 / NBRC 14720 / NCIMB 2260 / Gabara) (Halobacterium pharaonis).